A 126-amino-acid polypeptide reads, in one-letter code: C-type natriuretic peptide 2 (126 aa).

The signal sequence occupies residues 1-22 (MAVCSSSSLILLTVFLSVAVET). A propeptide spanning residues 23–102 (RPSSDRDEEQ…REKTRRWGRK (80 aa)) is cleaved from the precursor. A disordered region spans residues 44-80 (SLILAPPTSNDSTEGSSGSPEPPTPSEAPVLIHGDRG). Cysteines 110 and 126 form a disulfide.

This sequence belongs to the natriuretic peptide family. Brain and spinal cord.

Its subcellular location is the secreted. Its function is as follows. Exhibits natriuretic and vasodepressant activity. Has cGMP-stimulating activity. May help to regulate body fluid homeostasis in a variety of aquatic environments. The polypeptide is C-type natriuretic peptide 2 (Oryzias latipes (Japanese rice fish)).